A 352-amino-acid chain; its full sequence is O(6)-methylguanine-induced apoptosis 2 (352 aa).

7 STPGR repeats span residues 80–90 (NPGPGAYNVAR), 124–139 (PAPN…FSKK), 165–171 (PAPNQYS), 205–235 (GPSP…KTSR), 244–263 (NPGP…KKII), 286–295 (PGPGHYDIVD), and 325–335 (LPGPGAYHPEI).

Belongs to the STPG1 family.

The protein resides in the cytoplasm. It is found in the nucleus. Its function is as follows. May positively contribute to the induction of apoptosis triggered by O(6)-methylguanine. This Xenopus laevis (African clawed frog) protein is O(6)-methylguanine-induced apoptosis 2 (stpg1).